Reading from the N-terminus, the 425-residue chain is Protein CLP1 homolog (425 aa).

ATP contacts are provided by residues E18, K59, and 121–126; that span reads DVGKST.

This sequence belongs to the Clp1 family. Clp1 subfamily.

It is found in the nucleus. Its function is as follows. Required for endonucleolytic cleavage during polyadenylation-dependent pre-mRNA 3'-end formation. The chain is Protein CLP1 homolog (cbc) from Drosophila persimilis (Fruit fly).